The sequence spans 316 residues: protein SLOW GREEN 1, chloroplastic (316 aa).

A chloroplast-targeting transit peptide spans 1–39; that stretch reads MISSLSASSSLVSSFVAVKATPVTGPLIPRRDLLSIRIR. TPR repeat units follow at residues 118-151, 152-185, 226-259, and 261-293; these read VETL…QPEE, TEWK…NPLS, RDVR…DPKD, and RPYF…SPKK.

In terms of tissue distribution, ubiquitous. Preferentially expressed in newly formed green tissues.

Its subcellular location is the plastid. It is found in the chloroplast. Its function is as follows. Required for the early stage of chloroplast development. May be involved in chloroplast protein biosynthesis and/or degradation. This chain is protein SLOW GREEN 1, chloroplastic, found in Arabidopsis thaliana (Mouse-ear cress).